Here is a 74-residue protein sequence, read N- to C-terminus: NAD(P)H-quinone oxidoreductase subunit O (74 aa).

It belongs to the complex I NdhO subunit family. In terms of assembly, NDH-1 can be composed of about 15 different subunits; different subcomplexes with different compositions have been identified which probably have different functions.

The protein localises to the cellular thylakoid membrane. It carries out the reaction a plastoquinone + NADH + (n+1) H(+)(in) = a plastoquinol + NAD(+) + n H(+)(out). It catalyses the reaction a plastoquinone + NADPH + (n+1) H(+)(in) = a plastoquinol + NADP(+) + n H(+)(out). Functionally, NDH-1 shuttles electrons from an unknown electron donor, via FMN and iron-sulfur (Fe-S) centers, to quinones in the respiratory and/or the photosynthetic chain. The immediate electron acceptor for the enzyme in this species is believed to be plastoquinone. Couples the redox reaction to proton translocation, and thus conserves the redox energy in a proton gradient. Cyanobacterial NDH-1 also plays a role in inorganic carbon-concentration. This Synechococcus sp. (strain RCC307) protein is NAD(P)H-quinone oxidoreductase subunit O.